The chain runs to 254 residues: 3-deoxy-manno-octulosonate cytidylyltransferase (254 aa).

Belongs to the KdsB family.

It localises to the cytoplasm. The enzyme catalyses 3-deoxy-alpha-D-manno-oct-2-ulosonate + CTP = CMP-3-deoxy-beta-D-manno-octulosonate + diphosphate. It participates in nucleotide-sugar biosynthesis; CMP-3-deoxy-D-manno-octulosonate biosynthesis; CMP-3-deoxy-D-manno-octulosonate from 3-deoxy-D-manno-octulosonate and CTP: step 1/1. Its pathway is bacterial outer membrane biogenesis; lipopolysaccharide biosynthesis. In terms of biological role, activates KDO (a required 8-carbon sugar) for incorporation into bacterial lipopolysaccharide in Gram-negative bacteria. This is 3-deoxy-manno-octulosonate cytidylyltransferase from Bordetella pertussis (strain Tohama I / ATCC BAA-589 / NCTC 13251).